Reading from the N-terminus, the 175-residue chain is Bacterial proteasome activator (175 aa).

Residues L152–L175 are disordered. The HbYX motif signature appears at Q173 to L175.

This sequence belongs to the Bpa family. Forms a homooligomeric, either hexameric or heptameric, ring-like structure which stacks co-axially with the proteasomal alpha-rings.

Its function is as follows. Interacts with the core proteasome alpha-subunit (PrcA) through its C-terminal hydrophobic-tyrosine-X motif (HbYX motif). Interaction of Bpa with the proteasome stimulates proteasomal peptidase and casein degradation activity, which suggests Bpa could play a role in the removal of non-native or damaged proteins by influencing the conformation of the proteasome complex upon interaction. The sequence is that of Bacterial proteasome activator from Mycolicibacterium smegmatis (strain ATCC 700084 / mc(2)155) (Mycobacterium smegmatis).